Here is a 299-residue protein sequence, read N- to C-terminus: Bifunctional protein FolD (299 aa).

NADP(+)-binding positions include 166–168 (GRS), serine 191, and isoleucine 232.

This sequence belongs to the tetrahydrofolate dehydrogenase/cyclohydrolase family. As to quaternary structure, homodimer.

The enzyme catalyses (6R)-5,10-methylene-5,6,7,8-tetrahydrofolate + NADP(+) = (6R)-5,10-methenyltetrahydrofolate + NADPH. It catalyses the reaction (6R)-5,10-methenyltetrahydrofolate + H2O = (6R)-10-formyltetrahydrofolate + H(+). It participates in one-carbon metabolism; tetrahydrofolate interconversion. In terms of biological role, catalyzes the oxidation of 5,10-methylenetetrahydrofolate to 5,10-methenyltetrahydrofolate and then the hydrolysis of 5,10-methenyltetrahydrofolate to 10-formyltetrahydrofolate. In Anaplasma marginale (strain St. Maries), this protein is Bifunctional protein FolD.